The sequence spans 184 residues: Cell division protein ZapC (184 aa).

This sequence belongs to the ZapC family. Interacts directly with FtsZ.

The protein localises to the cytoplasm. In terms of biological role, contributes to the efficiency of the cell division process by stabilizing the polymeric form of the cell division protein FtsZ. Acts by promoting interactions between FtsZ protofilaments and suppressing the GTPase activity of FtsZ. The protein is Cell division protein ZapC of Idiomarina loihiensis (strain ATCC BAA-735 / DSM 15497 / L2-TR).